Here is a 359-residue protein sequence, read N- to C-terminus: MPAHLLQEEISSSYTTTTTITAPPSRVLQNGGGKLEKTPLYLEEDIRPEMRDDIYDPNYQDKEGPKPKLEYVWRNIILMGLLHLGALYGITLIPTCKIYTFLWVLFYYVISALGITAGVHRLWSHRTYKARLPLRVFLIIANTMAFQNDVFEWSRDHRAHHKFSETDADPHNSRRGFFFSHVGWLLVRKHPAVREKGATLDLSDLRAEKLVMFQRRYYKPGVLLLCFILPTLVPWYLWGESFQNSLFFATFLRYAVVLNATWLVNSAAHMYGYRPYDKTINPRENILVSLGAVGEGFHNYHHTFPYDYSASEYRWHINFTTFFIDCMAAIGLAYDRKKVSKAAVLGRMKRTGEESYKSG.

The Cytoplasmic portion of the chain corresponds to Met1–Val72. A helical membrane pass occupies residues Trp73–Ile93. Asn75 lines the substrate pocket. The Lumenal segment spans residues Pro94 to Lys97. Residues Ile98–Gly118 form a helical membrane-spanning segment. Residues Val119–Tyr217 are Cytoplasmic-facing. Residues His120 and His125 each contribute to the Fe cation site. Positions His120–His125 match the Histidine box-1 motif. Residues Asn148, Arg155, and Asp156 each contribute to the substrate site. Fe cation contacts are provided by His157, His160, and His161. A Histidine box-2 motif is present at residues His157–His161. Substrate is bound by residues Arg188 and Lys189. Position 203 is a phosphoserine (Ser203). Residues Tyr218–Leu237 form a helical membrane-spanning segment. Residues Trp238–Ser241 lie on the Lumenal side of the membrane. A helical transmembrane segment spans residues Phe242–Leu263. Trp262 contributes to the substrate binding site. The Cytoplasmic segment spans residues Val264–Gly359. Residues His269, His298, His301, and His302 each coordinate Fe cation. The Histidine box-3 motif lies at His298 to His302.

This sequence belongs to the fatty acid desaturase type 1 family. Fe(2+) serves as cofactor.

Its subcellular location is the endoplasmic reticulum membrane. It catalyses the reaction octadecanoyl-CoA + 2 Fe(II)-[cytochrome b5] + O2 + 2 H(+) = (9Z)-octadecenoyl-CoA + 2 Fe(III)-[cytochrome b5] + 2 H2O. In terms of biological role, stearoyl-CoA desaturase that utilizes O(2) and electrons from reduced cytochrome b5 to introduce the first double bond into saturated fatty acyl-CoA substrates. Catalyzes the insertion of a cis double bond at the delta-9 position into fatty acyl-CoA substrates including palmitoyl-CoA and stearoyl-CoA. Gives rise to a mixture of 16:1 and 18:1 unsaturated fatty acids. Plays an important role in lipid biosynthesis. Plays an important role in regulating the expression of genes that are involved in lipogenesis and in regulating mitochondrial fatty acid oxidation. Plays an important role in body energy homeostasis. Contributes to the biosynthesis of membrane phospholipids, cholesterol esters and triglycerides. This Ovis aries (Sheep) protein is Acyl-CoA desaturase (SCD).